The following is a 484-amino-acid chain: Mitogen-activated protein kinase SLT2/MPK1 (484 aa).

A Protein kinase domain is found at 23–318; the sequence is FQLIKEIGHG…VDEALEHPYL (296 aa). ATP-binding positions include 29–37 and Lys-54; that span reads IGHGAYGIV. Catalysis depends on Asp-153, which acts as the Proton acceptor. At Thr-190 the chain carries Phosphothreonine. Residues 190–192 carry the TXY motif; the sequence is TEY. Tyr-192 carries the phosphotyrosine modification. A compositionally biased stretch (low complexity) spans 383 to 392; the sequence is QQQQQQQQQP. Disordered stretches follow at residues 383 to 403 and 426 to 464; these read QQQQQQQQQPSDVDNGNAAAS and IHSQNLPRHDADFPPRPQESMMEMRPATGNTADIPPQND.

Belongs to the protein kinase superfamily. CMGC Ser/Thr protein kinase family. MAP kinase subfamily. In terms of assembly, interacts with RLM1. Mg(2+) serves as cofactor. Post-translationally, dually phosphorylated on Thr-190 and Tyr-192, which activates the enzyme.

It carries out the reaction L-seryl-[protein] + ATP = O-phospho-L-seryl-[protein] + ADP + H(+). The catalysed reaction is L-threonyl-[protein] + ATP = O-phospho-L-threonyl-[protein] + ADP + H(+). Activated by tyrosine and threonine phosphorylation by MKK1 and MKK2. Functionally, serine/threonine protein kinase involved in a signal transduction pathway that plays a role in yeast cell morphogenesis and cell growth. This pathway seems to start by SMP3; then involve the kinase PKC1 that may act the BCK1 kinase that then phosphorylates MKK1 and MKK2 which themselves phosphorylate the SLT2/MPK1 kinase which itself then phosphorylates and activates the transcription factor RLM1. Directly phosphorylates BCY1 upon TOR complex 1 (TORC1) inhibition. The polypeptide is Mitogen-activated protein kinase SLT2/MPK1 (SLT2) (Saccharomyces cerevisiae (strain ATCC 204508 / S288c) (Baker's yeast)).